Here is a 203-residue protein sequence, read N- to C-terminus: MNKIVIASNNAGKLAEISRLLAPLGIEVVTQSSLGVTEADEPHMTFVENALAKARHASLATGLPALADDSGICVSALRGDPGVFSARYAGEPRSDERNNRKLVEALHGQSDRRAYYYCVIVLLRHGQDPQPVIIEDTWRGEIIAEPIGQGGFGYDPHFFLPELGKTAAELSIEEKNRISHRGKALARLVQMLSENETVPVVPV.

8–13 (SNNAGK) is a substrate binding site. Mg(2+)-binding residues include Asp40 and Asp69. The active-site Proton acceptor is the Asp69. Residues Ser70, 152-155 (FGYD), Lys175, and 180-181 (HR) contribute to the substrate site.

This sequence belongs to the HAM1 NTPase family. As to quaternary structure, homodimer. The cofactor is Mg(2+).

The enzyme catalyses XTP + H2O = XMP + diphosphate + H(+). It carries out the reaction dITP + H2O = dIMP + diphosphate + H(+). The catalysed reaction is ITP + H2O = IMP + diphosphate + H(+). Its function is as follows. Pyrophosphatase that catalyzes the hydrolysis of nucleoside triphosphates to their monophosphate derivatives, with a high preference for the non-canonical purine nucleotides XTP (xanthosine triphosphate), dITP (deoxyinosine triphosphate) and ITP. Seems to function as a house-cleaning enzyme that removes non-canonical purine nucleotides from the nucleotide pool, thus preventing their incorporation into DNA/RNA and avoiding chromosomal lesions. This chain is dITP/XTP pyrophosphatase, found in Nitrosomonas europaea (strain ATCC 19718 / CIP 103999 / KCTC 2705 / NBRC 14298).